We begin with the raw amino-acid sequence, 328 residues long: Phosphate acyltransferase (328 aa).

This sequence belongs to the PlsX family. In terms of assembly, homodimer. Probably interacts with PlsY.

It localises to the cytoplasm. It catalyses the reaction a fatty acyl-[ACP] + phosphate = an acyl phosphate + holo-[ACP]. It participates in lipid metabolism; phospholipid metabolism. Functionally, catalyzes the reversible formation of acyl-phosphate (acyl-PO(4)) from acyl-[acyl-carrier-protein] (acyl-ACP). This enzyme utilizes acyl-ACP as fatty acyl donor, but not acyl-CoA. The sequence is that of Phosphate acyltransferase from Pseudothermotoga lettingae (strain ATCC BAA-301 / DSM 14385 / NBRC 107922 / TMO) (Thermotoga lettingae).